Consider the following 685-residue polypeptide: MQRSSGINNLHIPTSPMSFSSNGINLPGSMVLDGSPSMQHLPQQQQRQLLEQQAGQGSVPMRENSYSHVDKKLRLEVKQEDLLQQQILQQLIQRQDPTGRNPQMQALLQQQRVRQHQQMLQSMSPSQRLQLQKQQQLRQQLQQQGTQQISPNVRPYEVGVCARKLMMYLYHLQQRPAENCITYWRKFVAEYFSPRAKQRLCLSQYESVGHHALGMFPQAAPDMWQCDLCGTKSGKGFEATFDVLARLIEIKFASGIIDELLYLDHPRENRFPNGLMMLEYRKAVQETVHEQFRVVREGHLRIIFSPDLKILSWEFCARRHEELLLRRLIAPQVNQLLQVAQKCQSTISESGSQGVSQQDIQSNSNMVLGAGRQLAKFMELQSLNDLGYPKRYIRTLQISEVVKSMKDLMNFTGEHKVGPLEGLKQLLEQTATVKLQRQKMQEMEQFGNSGAMSGPAQAQMTLSSGTMSGSTANNNSNNHHQIVGRGAMNGSPQATAALTNYQSMLIRQNAMNNQNSNTGNQEGFSSQNPTLNSNQSPSSSSQQRENLATSGFPSSPQMQQQQHILNGTPNMLPQNHPHQLQSPHSHGNTQEQQMLHQLLQEMTENGASVEQQQAFPGQSGSNNNTERNTTASTSNISGGGRVPSRINSFKASSNNNLPFSEDISVTDHDFSEDGFFNNSDIYGGL.

2 disordered regions span residues 25-66 (NLPG…ENSY) and 108-129 (LQQQRVRQHQQMLQSMSPSQRL). Low complexity predominate over residues 39-56 (QHLPQQQQRQLLEQQAGQ). The segment at 176–423 (PAENCITYWR…EHKVGPLEGL (248 aa)) is dimerization. The Nuclear localization signal signature appears at 185-199 (RKFVAEYFSPRAKQR). The span at 447–459 (GNSGAMSGPAQAQ) shows a compositional bias: polar residues. Disordered regions lie at residues 447-491 (GNSG…MNGS), 512-591 (NNQN…NTQE), and 611-658 (QQQA…NNLP). A compositionally biased stretch (low complexity) spans 460–471 (MTLSSGTMSGST). Residues 512 to 524 (NNQNSNTGNQEGF) show a composition bias toward polar residues. The span at 525-543 (SSQNPTLNSNQSPSSSSQQ) shows a compositional bias: low complexity. Polar residues-rich tracts occupy residues 544-588 (RENL…SHGN), 611-636 (QQQAFPGQSGSNNNTERNTTASTSNI), and 645-658 (RINSFKASSNNNLP).

It belongs to the adn1/SEU family.

The protein resides in the nucleus. Functionally, probable transcription regulator that functions in the development of the carpel margin meristem similarly to SEUSS (SEU). In association with SEU, supports organ development from meristematic regions by facilitating auxin response and thus organ initiation, and by sustaining meristematic potential through the maintenance of PHABULOSA expression. The polypeptide is Probable transcriptional regulator SLK3 (SLK3) (Arabidopsis thaliana (Mouse-ear cress)).